The chain runs to 182 residues: MTNQQGRLRTRVAVFACVAAAALIVDQLTKAWAMAALSNGQTIRVIPGLLSFTLVRNPGASLGMGSGATWVISLLAVVACVALAVAGVRTISMKWSVALSFAFAGALGNLIDRVMYADGFLNGKVVDFLNYGWSVGNVADIYLVVAGVVLVILILMGEPFSHKDLIEQSDESLQSEPEADAK.

3 helical membrane passes run valine 12–tryptophan 32, alanine 68–valine 88, and isoleucine 91–isoleucine 111. Active-site residues include aspartate 127 and aspartate 140. A helical transmembrane segment spans residues valine 135 to leucine 155.

It belongs to the peptidase A8 family.

The protein resides in the cell membrane. It catalyses the reaction Release of signal peptides from bacterial membrane prolipoproteins. Hydrolyzes -Xaa-Yaa-Zaa-|-(S,diacylglyceryl)Cys-, in which Xaa is hydrophobic (preferably Leu), and Yaa (Ala or Ser) and Zaa (Gly or Ala) have small, neutral side chains.. The protein operates within protein modification; lipoprotein biosynthesis (signal peptide cleavage). Its function is as follows. This protein specifically catalyzes the removal of signal peptides from prolipoproteins. The sequence is that of Lipoprotein signal peptidase from Bifidobacterium longum subsp. infantis (strain ATCC 15697 / DSM 20088 / JCM 1222 / NCTC 11817 / S12).